The following is a 1174-amino-acid chain: K(+) efflux antiporter 2, chloroplastic (1174 aa).

Residues 1–57 constitute a chloroplast transit peptide; it reads MDFASSVQRQSMFHGGADFASYCLPNRMISAKLCPKGLGGTRFWDPMIDSKVRSAIR. Over 58–565 the chain is Stromal; the sequence is SKRNVSYRSS…MFPQQEVNEE (508 aa). The interval 119 to 141 is disordered; the sequence is GSDDREVTFSKEEKDTREQDSAP. A coiled-coil region spans residues 142 to 350; the sequence is SLEELRDLLN…ALQRAEKTLF (209 aa). Lys170 is modified (N6-acetyllysine; by NSI). Over residues 420–448 the composition is skewed to basic and acidic residues; it reads EAEGEAEKSKNVVLTKKQEVQKDLPRESS. The tract at residues 420 to 457 is disordered; sequence EAEGEAEKSKNVVLTKKQEVQKDLPRESSSHNGTKTSL. The chain crosses the membrane as a helical span at residues 566-586; the sequence is EASLLDVLWLLLASVIFVPLF. Topologically, residues 587-592 are chloroplast intermembrane; it reads QKIPGG. Residues 593 to 613 traverse the membrane as a helical segment; the sequence is SPVLGYLAAGILIGPYGLSII. Residues 614–620 lie on the Stromal side of the membrane; that stretch reads RNVHGTK. The chain crosses the membrane as a helical span at residues 621–641; the sequence is AIAEFGVVFLLFNIGLELSVE. Over 642–648 the chain is Chloroplast intermembrane; sequence RLSSMKK. A helical transmembrane segment spans residues 649–669; the sequence is YVFGLGSAQVLVTAAVIGLIT. Over 670–678 the chain is Stromal; the sequence is HYVAGQAGP. A helical transmembrane segment spans residues 679 to 699; the sequence is AAIVIGNGLALSSTAVVLQVL. Residues 700–713 lie on the Chloroplast intermembrane side of the membrane; that stretch reads QERGESTSRHGRAT. The chain crosses the membrane as a helical span at residues 714 to 734; the sequence is FSVLLFQDLAVVVLLILIPLI. The Stromal segment spans residues 735 to 746; that stretch reads SPNSSKGGIGFQ. Residues 747–767 form a helical membrane-spanning segment; that stretch reads AIAEALGLAAIKAAVAITGII. Residues 768–807 are Chloroplast intermembrane-facing; it reads AGGRLLLRPIYKQIAENRNAEIFSANTLLVILGTSLLTAR. Residues 808–828 form a helical membrane-spanning segment; it reads AGLSMALGAFLAGLLLAETEF. The Stromal segment spans residues 829–841; that stretch reads SLQVESDIAPYRG. The helical transmembrane segment at 842–862 threads the bilayer; the sequence is LLLGLFFMTVGMSIDPKLLLA. At 863–865 the chain is on the chloroplast intermembrane side; it reads NFP. A helical membrane pass occupies residues 866-886; that stretch reads LIMGTLGLLLVGKTILVVIIG. Residues 887–898 are Stromal-facing; it reads KLFGISIISAVR. Residues 899-919 form a helical membrane-spanning segment; that stretch reads VGLLLAPGGEFAFVAFGEAVN. Over 920-928 the chain is Chloroplast intermembrane; sequence QGIMTPQLS. The helical transmembrane segment at 929–949 threads the bilayer; it reads SLLFLVVGISMALTPWLAAGG. The Stromal portion of the chain corresponds to 950–1174; it reads QLIASRFELQ…NQIIEGTLAI (225 aa). In terms of domain architecture, RCK N-terminal spans 975-1092; the sequence is QGHIIICGFG…EKAGATAVVP (118 aa). The segment at 1141-1174 is disordered; it reads SLGYGFSRSTSKPKPPSPSETSDDNQIIEGTLAI.

The protein belongs to the monovalent cation:proton antiporter 2 (CPA2) transporter (TC 2.A.37) family. KEA (TC 2.A.37.1) subfamily. Acetylated at Lys-170 by the stromal acetyltransferase enzyme NSI. As to expression, detected in leaves, stems and flowers. Expressed in shoots and roots. Mainly localized to leaf veins, hypocotyls, mesophylls and guard cells. Accumulates at high levels in small and dividing plastids (at protein level).

It is found in the plastid. The protein resides in the chloroplast inner membrane. It localises to the plastid inner membrane. It carries out the reaction K(+)(in) + H(+)(out) = K(+)(out) + H(+)(in). Its activity is regulated as follows. Repressed by sodium ions Na(+). Functionally, electroneutral K(+)/H(+) efflux antiporter modulating monovalent cation and pH homeostasis in plastids, especially during plastid division and thylakoid membrane formation. Transports K(+) and Cs(+) preferentially relative to Na(+) or Li(+). May function in osmotic adjustment. Collaboratively with KEA1, adjusts alkaline stromal pH upon light to dark transitions in plastids. Together with KEA1, critical for chloroplast development, including chloroplast RNA-metabolism (e.g. rRNA maturation, polysome loading and RNA-protein interactions) and plastid gene expression (PGE), ion homeostasis, and photosynthesis. Contributes, during early seedling development, to the regulation of photosynthesis and abscisic acid- (ABA-) mediated primary root growth in a sucrose-dependent manner. Involved in the regulation of reactive oxygen and nitrogen species (ROS and RNS) metabolism. Required in roots for rapid hyperosmotic-induced Ca(2+) responses and for osmo-sensory potentiation in hyperosmotic conditions. May counteract resilience to drought and salt stress, involving photorespiratory pathway and stomata closure. The sequence is that of K(+) efflux antiporter 2, chloroplastic from Arabidopsis thaliana (Mouse-ear cress).